A 650-amino-acid chain; its full sequence is 1-deoxy-D-xylulose-5-phosphate synthase (650 aa).

Residues 1 to 13 (MSKIKNDKRETGH) are compositionally biased toward basic and acidic residues. The interval 1 to 23 (MSKIKNDKRETGHLKSPPETPLL) is disordered. Thiamine diphosphate-binding positions include His92 and 133–135 (AHS). Residue Asp164 coordinates Mg(2+). Residues 165–166 (GA), Asn193, Tyr302, and Glu384 each bind thiamine diphosphate. Mg(2+) is bound at residue Asn193.

It belongs to the transketolase family. DXPS subfamily. As to quaternary structure, homodimer. Requires Mg(2+) as cofactor. Thiamine diphosphate serves as cofactor.

It catalyses the reaction D-glyceraldehyde 3-phosphate + pyruvate + H(+) = 1-deoxy-D-xylulose 5-phosphate + CO2. The protein operates within metabolic intermediate biosynthesis; 1-deoxy-D-xylulose 5-phosphate biosynthesis; 1-deoxy-D-xylulose 5-phosphate from D-glyceraldehyde 3-phosphate and pyruvate: step 1/1. Functionally, catalyzes the acyloin condensation reaction between C atoms 2 and 3 of pyruvate and glyceraldehyde 3-phosphate to yield 1-deoxy-D-xylulose-5-phosphate (DXP). The chain is 1-deoxy-D-xylulose-5-phosphate synthase from Chelativorans sp. (strain BNC1).